Consider the following 565-residue polypeptide: NAD-dependent malic enzyme (565 aa).

The active-site Proton donor is the tyrosine 104. Arginine 157 contributes to the NAD(+) binding site. Catalysis depends on lysine 175, which acts as the Proton acceptor. Residues glutamate 246, aspartate 247, and aspartate 270 each contribute to the a divalent metal cation site. 2 residues coordinate NAD(+): aspartate 270 and asparagine 418.

This sequence belongs to the malic enzymes family. Homotetramer. It depends on Mg(2+) as a cofactor. Mn(2+) serves as cofactor.

The enzyme catalyses (S)-malate + NAD(+) = pyruvate + CO2 + NADH. The catalysed reaction is oxaloacetate + H(+) = pyruvate + CO2. The polypeptide is NAD-dependent malic enzyme (Erwinia tasmaniensis (strain DSM 17950 / CFBP 7177 / CIP 109463 / NCPPB 4357 / Et1/99)).